The sequence spans 122 residues: Large ribosomal subunit protein uL14 (122 aa).

It belongs to the universal ribosomal protein uL14 family. In terms of assembly, part of the 50S ribosomal subunit. Forms a cluster with proteins L3 and L19. In the 70S ribosome, L14 and L19 interact and together make contacts with the 16S rRNA in bridges B5 and B8. Can interact with ribosomal silencing factor RsfS, which may inhibit ribosomal subunit association.

In terms of biological role, binds to 23S rRNA. Forms part of two intersubunit bridges in the 70S ribosome. This is Large ribosomal subunit protein uL14 from Synechocystis sp. (strain ATCC 27184 / PCC 6803 / Kazusa).